A 188-amino-acid polypeptide reads, in one-letter code: Peptidyl-tRNA hydrolase (188 aa).

TRNA is bound at residue Tyr-16. His-21 functions as the Proton acceptor in the catalytic mechanism. TRNA is bound by residues Phe-66, Asn-68, and Asn-114.

This sequence belongs to the PTH family. As to quaternary structure, monomer.

The protein localises to the cytoplasm. The enzyme catalyses an N-acyl-L-alpha-aminoacyl-tRNA + H2O = an N-acyl-L-amino acid + a tRNA + H(+). In terms of biological role, hydrolyzes ribosome-free peptidyl-tRNAs (with 1 or more amino acids incorporated), which drop off the ribosome during protein synthesis, or as a result of ribosome stalling. Functionally, catalyzes the release of premature peptidyl moieties from peptidyl-tRNA molecules trapped in stalled 50S ribosomal subunits, and thus maintains levels of free tRNAs and 50S ribosomes. This is Peptidyl-tRNA hydrolase from Geobacter sp. (strain M21).